We begin with the raw amino-acid sequence, 179 residues long: Probable chorismate pyruvate-lyase (179 aa).

Positions 82, 120, and 165 each coordinate substrate.

It belongs to the UbiC family.

It is found in the cytoplasm. The catalysed reaction is chorismate = 4-hydroxybenzoate + pyruvate. It functions in the pathway cofactor biosynthesis; ubiquinone biosynthesis. In terms of biological role, removes the pyruvyl group from chorismate, with concomitant aromatization of the ring, to provide 4-hydroxybenzoate (4HB) for the ubiquinone pathway. The sequence is that of Probable chorismate pyruvate-lyase from Vibrio cholerae serotype O1 (strain ATCC 39315 / El Tor Inaba N16961).